Reading from the N-terminus, the 60-residue chain is Large ribosomal subunit protein uL30 (60 aa).

This sequence belongs to the universal ribosomal protein uL30 family. As to quaternary structure, part of the 50S ribosomal subunit.

This Ligilactobacillus salivarius (strain UCC118) (Lactobacillus salivarius) protein is Large ribosomal subunit protein uL30.